Here is a 310-residue protein sequence, read N- to C-terminus: MAPKIFIDGEHGTTGLQIRTRMADRRDVELLSIPEAERRNAAMREDMLNSADIAILCLPDDASKEAVKMVSANNNVRVIDTSTAFRVHPDWAYGFAEMDKDQGGKITSARFVANPGCYPTGAVALIRPLRAAGILPDGYPVTVNAVSGYTGGGKQMIAQMENADHPDAITAPHFLYGLPLTHKHVPEMTTHGLLDRAPIFSPSVGKFAQGMIVQVPLHLDNLAEGATMESIHAALVGHFAGQDVVQVVSLAESRALPRINAVELAGKDTMKLFVFGTPGTSQVNLVALLDNLGKGASGAAVQNMDLMLSA.

C117 is an active-site residue.

This sequence belongs to the NAGSA dehydrogenase family. Type 2 subfamily.

It localises to the cytoplasm. The catalysed reaction is N-acetyl-L-glutamate 5-semialdehyde + phosphate + NADP(+) = N-acetyl-L-glutamyl 5-phosphate + NADPH + H(+). The protein operates within amino-acid biosynthesis; L-arginine biosynthesis; N(2)-acetyl-L-ornithine from L-glutamate: step 3/4. Its function is as follows. Catalyzes the NADPH-dependent reduction of N-acetyl-5-glutamyl phosphate to yield N-acetyl-L-glutamate 5-semialdehyde. In Rhizobium rhizogenes (strain K84 / ATCC BAA-868) (Agrobacterium radiobacter), this protein is N-acetyl-gamma-glutamyl-phosphate reductase.